The following is a 303-amino-acid chain: 4-sulfomuconolactone hydrolase (303 aa).

The protein belongs to the metallo-dependent hydrolases superfamily. Sulfomuconolactone hydrolase family. Monomer. Zn(2+) is required as a cofactor.

It catalyses the reaction 4-sulfomuconolactone + H2O = maleylacetate + sulfite + 2 H(+). Completely inhibited by ZnCl(2) and CuCl(2). In terms of biological role, involved in the degradation of 4-sulfocatechol which is a central intermediate in the degradation of substituted sulfonated benzenes. Catalyzes the hydrolytical desulfonation of 4-sulfomuconolactone to yield maleylacetate. This Hydrogenophaga intermedia protein is 4-sulfomuconolactone hydrolase.